Consider the following 407-residue polypeptide: Accessory Sec system protein translocase subunit SecY2 (407 aa).

10 helical membrane-spanning segments follow: residues 13-33, 65-85, 104-124, 133-153, 158-178, 192-212, 248-268, 287-307, 345-365, and 370-390; these read FLWT…TLPF, FFSI…MFTV, MLLT…NLPL, GTIV…LIWL, SSMG…SYIP, PLIL…AVLV, IMYA…LLFF, IPWF…FAFI, FAFV…LLIF, and YMRL…VFSI.

It belongs to the SecY/SEC61-alpha family. SecY2 subfamily. In terms of assembly, may form heterotrimers with SecE and SecG subunits (Potential). Component of the accessory SecA2/SecY2 protein translocase complex required to export cell wall protein GspB.

It localises to the cell membrane. The central subunit of a protein translocation channel (Potential). Part of the accessory SecA2/SecY2 system specifically required to export GspB, a serine-rich repeat cell wall protein encoded upstream in the same operon. The polypeptide is Accessory Sec system protein translocase subunit SecY2 (Streptococcus gordonii).